We begin with the raw amino-acid sequence, 459 residues long: UDP-N-acetylglucosamine 1-carboxyvinyltransferase (459 aa).

40 to 41 (KN) serves as a coordination point for phosphoenolpyruvate. Arg-111 serves as a coordination point for UDP-N-acetyl-alpha-D-glucosamine. Cys-135 functions as the Proton donor in the catalytic mechanism. Residue Cys-135 is modified to 2-(S-cysteinyl)pyruvic acid O-phosphothioketal. Residues 140–144 (RPVDL), Asp-324, and Val-346 each bind UDP-N-acetyl-alpha-D-glucosamine. Positions 437 to 459 (PSAPPSEVSSAVAAGPDAAAAPV) are disordered. Over residues 441-459 (PSEVSSAVAAGPDAAAAPV) the composition is skewed to low complexity.

It belongs to the EPSP synthase family. MurA subfamily.

The protein localises to the cytoplasm. The enzyme catalyses phosphoenolpyruvate + UDP-N-acetyl-alpha-D-glucosamine = UDP-N-acetyl-3-O-(1-carboxyvinyl)-alpha-D-glucosamine + phosphate. The protein operates within cell wall biogenesis; peptidoglycan biosynthesis. Its function is as follows. Cell wall formation. Adds enolpyruvyl to UDP-N-acetylglucosamine. The protein is UDP-N-acetylglucosamine 1-carboxyvinyltransferase of Gloeobacter violaceus (strain ATCC 29082 / PCC 7421).